The sequence spans 236 residues: Probable transcriptional regulatory protein UUR10_0292 (236 aa).

This sequence belongs to the TACO1 family.

The protein resides in the cytoplasm. The protein is Probable transcriptional regulatory protein UUR10_0292 of Ureaplasma urealyticum serovar 10 (strain ATCC 33699 / Western).